A 122-amino-acid polypeptide reads, in one-letter code: Large ribosomal subunit protein uL14 (122 aa).

This sequence belongs to the universal ribosomal protein uL14 family. In terms of assembly, part of the 50S ribosomal subunit. Forms a cluster with proteins L3 and L19. In the 70S ribosome, L14 and L19 interact and together make contacts with the 16S rRNA in bridges B5 and B8.

Its function is as follows. Binds to 23S rRNA. Forms part of two intersubunit bridges in the 70S ribosome. The sequence is that of Large ribosomal subunit protein uL14 from Limosilactobacillus fermentum (strain NBRC 3956 / LMG 18251) (Lactobacillus fermentum).